Reading from the N-terminus, the 476-residue chain is Aspartyl/glutamyl-tRNA(Asn/Gln) amidotransferase subunit B (476 aa).

Belongs to the GatB/GatE family. GatB subfamily. Heterotrimer of A, B and C subunits.

It carries out the reaction L-glutamyl-tRNA(Gln) + L-glutamine + ATP + H2O = L-glutaminyl-tRNA(Gln) + L-glutamate + ADP + phosphate + H(+). The catalysed reaction is L-aspartyl-tRNA(Asn) + L-glutamine + ATP + H2O = L-asparaginyl-tRNA(Asn) + L-glutamate + ADP + phosphate + 2 H(+). Its function is as follows. Allows the formation of correctly charged Asn-tRNA(Asn) or Gln-tRNA(Gln) through the transamidation of misacylated Asp-tRNA(Asn) or Glu-tRNA(Gln) in organisms which lack either or both of asparaginyl-tRNA or glutaminyl-tRNA synthetases. The reaction takes place in the presence of glutamine and ATP through an activated phospho-Asp-tRNA(Asn) or phospho-Glu-tRNA(Gln). This is Aspartyl/glutamyl-tRNA(Asn/Gln) amidotransferase subunit B from Lactobacillus gasseri (strain ATCC 33323 / DSM 20243 / BCRC 14619 / CIP 102991 / JCM 1131 / KCTC 3163 / NCIMB 11718 / NCTC 13722 / AM63).